The chain runs to 533 residues: Early growth response protein 1 (533 aa).

2 disordered regions span residues 1–94 (MAAA…EQPY) and 161–237 (MTNP…PPPA). Over residues 68–77 (SGGGGGGGSN) the composition is skewed to gly residues. The segment covering 164–189 (PPTSSSSAPSPAASSSSSASQSPPLS) has biased composition (low complexity). K303 participates in a covalent cross-link: Glycyl lysine isopeptide (Lys-Gly) (interchain with G-Cter in SUMO2). Positions 316–336 (PSRMRKYPNRPSKTPPHERPY) are disordered. 3 C2H2-type zinc fingers span residues 336 to 360 (YACP…IRIH), 366 to 388 (FQCR…IRTH), and 394 to 416 (FACD…TKIH). Residues 407-478 (DERKRHTKIH…SSTYPSPAHS (72 aa)) form a disordered region. Basic residues predominate over residues 411–421 (RHTKIHLRQKD). Low complexity predominate over residues 427-475 (SVVASPAASSLSSYPSPVATSYPSPATTSFPSPVPTSYSSPGSSTYPSP).

The protein belongs to the EGR C2H2-type zinc-finger protein family. As to quaternary structure, interacts with SNAI1 and SP1 upon 12-O-tetradecanoylphorbol-13-acetate (TPA) induction. As to expression, detected in lung vasculature and in mononuclear phagocytes. Detected in liver (at protein level). Expressed in the liver in a circadian manner.

It is found in the nucleus. It localises to the cytoplasm. Its function is as follows. Transcriptional regulator. Recognizes and binds to the DNA sequence 5'-GCG(T/G)GGGCG-3'(EGR-site) in the promoter region of target genes. Binds double-stranded target DNA, irrespective of the cytosine methylation status. Regulates the transcription of numerous target genes, and thereby plays an important role in regulating the response to growth factors, DNA damage, and ischemia. Plays a role in the regulation of cell survival, proliferation and cell death. Activates expression of p53/TP53 and TGFB1, and thereby helps prevent tumor formation. Required for normal progress through mitosis and normal proliferation of hepatocytes after partial hepatectomy. Mediates responses to ischemia and hypoxia; regulates the expression of proteins such as IL1B and CXCL2 that are involved in inflammatory processes and development of tissue damage after ischemia. Regulates biosynthesis of luteinizing hormone (LHB) in the pituitary. Regulates the amplitude of the expression rhythms of clock genes: BMAL1, PER2 and NR1D1 in the liver via the activation of PER1 (clock repressor) transcription. Regulates the rhythmic expression of core-clock gene BMAL1 in the suprachiasmatic nucleus (SCN). The protein is Early growth response protein 1 (Egr1) of Mus musculus (Mouse).